The sequence spans 189 residues: Flavin prenyltransferase UbiX (189 aa).

Residues 10–12 (GAS), serine 36, 91–94 (STNT), and arginine 126 each bind FMN. Dimethylallyl phosphate is bound by residues tyrosine 156 and lysine 172.

Belongs to the UbiX/PAD1 family.

It carries out the reaction dimethylallyl phosphate + FMNH2 = prenylated FMNH2 + phosphate. Functionally, flavin prenyltransferase that catalyzes the synthesis of the prenylated FMN cofactor (prenyl-FMN) for 4-hydroxy-3-polyprenylbenzoic acid decarboxylase UbiD. The prenyltransferase is metal-independent and links a dimethylallyl moiety from dimethylallyl monophosphate (DMAP) to the flavin N5 and C6 atoms of FMN. The protein is Flavin prenyltransferase UbiX of Aquifex aeolicus (strain VF5).